We begin with the raw amino-acid sequence, 673 residues long: Protein kinase ORF74 (673 aa).

The Protein kinase domain maps to threonine 128–tyrosine 404. Aspartate 252 functions as the Proton acceptor in the catalytic mechanism. The segment at methionine 340 to threonine 364 is disordered. Residues leucine 345–aspartate 355 show a composition bias toward basic and acidic residues.

Belongs to the protein kinase superfamily. Ser/Thr protein kinase family.

The enzyme catalyses L-seryl-[protein] + ATP = O-phospho-L-seryl-[protein] + ADP + H(+). It carries out the reaction L-threonyl-[protein] + ATP = O-phospho-L-threonyl-[protein] + ADP + H(+). The polypeptide is Protein kinase ORF74 (ORF74) (Ictalurid herpesvirus 1 (strain Auburn) (IcHV-1)).